The following is a 123-amino-acid chain: Hydrogenase maturation factor HypA (123 aa).

Residue His2 participates in Ni(2+) binding. Positions 73, 76, 90, and 93 each coordinate Zn(2+).

This sequence belongs to the HypA/HybF family.

In terms of biological role, involved in the maturation of [NiFe] hydrogenases. Required for nickel insertion into the metal center of the hydrogenase. The polypeptide is Hydrogenase maturation factor HypA (Roseiflexus sp. (strain RS-1)).